The chain runs to 321 residues: uncharacterized protein (321 aa).

Positions 157–220 (TLEQPIEEDF…EGAEEDSHEH (64 aa)) are disordered. Positions 161-214 (PIEEDFDEQDENDQNERDEDDAEEQEEDEVEEEEEEQQEEEEGENDEELTEGAE) are enriched in acidic residues. The stretch at 167-212 (DEQDENDQNERDEDDAEEQEEDEVEEEEEEQQEEEEGENDEELTEG) forms a coiled coil.

This is an uncharacterized protein from Dictyostelium discoideum (Social amoeba).